A 780-amino-acid polypeptide reads, in one-letter code: Gelsolin (780 aa).

The residue at position 1 (M1) is an N-acetylmethionine; alternate. A signal peptide spans M1 to A25. Positions V51–F174 are actin-severing. One copy of the Gelsolin-like 1 repeat lies at F74 to F155. Y84 carries the post-translational modification Phosphotyrosine. G90, D91, E122, D134, G139, and A141 together coordinate Ca(2+). The tract at residues D121–G124 is actin-actin interfilament contact point. K160–K167 is an a 1,2-diacyl-sn-glycero-3-phospho-(1D-myo-inositol-4,5-bisphosphate) binding site. Residue V170 coordinates Ca(2+). An a 1,2-diacyl-sn-glycero-3-phospho-(1D-myo-inositol-4,5-bisphosphate)-binding site is contributed by R186–R194. A Gelsolin-like 2 repeat occupies V196–M268. Positions 211 and 212 each coordinate Ca(2+). Cysteines 213 and 226 form a disulfide. Ca(2+) is bound at residue E234. Residues G244–L269 form a disordered region. Ca(2+)-binding residues include D284, E327, D328, and E352. One copy of the Gelsolin-like 3 repeat lies at D315 to F387. Phosphotyrosine occurs at positions 407 and 463. The segment at A432–A780 is actin-binding, Ca-sensitive. A Gelsolin-like 4 repeat occupies S453–M534. 7 residues coordinate Ca(2+): G469, D470, E500, D512, G517, P519, and T549. Residues R575–W640 form a Gelsolin-like 5 repeat. An N6-acetyllysine modification is found at K582. Residues N589 and D590 each contribute to the Ca(2+) site. A Phosphotyrosine modification is found at Y601. Ca(2+) is bound at residue E612. Residue Y649 is modified to Phosphotyrosine. The Gelsolin-like 6 repeat unit spans residues I679 to F754. Ca(2+)-binding residues include D694, D695, and E717. Position 740 is a phosphothreonine (T740).

This sequence belongs to the villin/gelsolin family. As to quaternary structure, binds to actin and to fibronectin. Identified in a complex composed of ACTA1, COBL, GSN and TMSB4X. Interacts with the inactive form of EIF2AK2/PKR. Interacts with FLII. Post-translationally, phosphorylated on tyrosine residues in vitro.

The protein localises to the cytoplasm. The protein resides in the cytoskeleton. It localises to the secreted. Functionally, calcium-regulated, actin-modulating protein that binds to the plus (or barbed) ends of actin monomers or filaments, preventing monomer exchange (end-blocking or capping). It can promote the assembly of monomers into filaments (nucleation) as well as sever filaments already formed. Plays a role in ciliogenesis. The chain is Gelsolin (Gsn) from Mus musculus (Mouse).